The primary structure comprises 363 residues: Ribosomal RNA small subunit methyltransferase H (363 aa).

S-adenosyl-L-methionine contacts are provided by residues 55 to 57 (GGH), aspartate 75, aspartate 122, and glutamine 129.

Belongs to the methyltransferase superfamily. RsmH family.

It localises to the cytoplasm. The enzyme catalyses cytidine(1402) in 16S rRNA + S-adenosyl-L-methionine = N(4)-methylcytidine(1402) in 16S rRNA + S-adenosyl-L-homocysteine + H(+). Specifically methylates the N4 position of cytidine in position 1402 (C1402) of 16S rRNA. The chain is Ribosomal RNA small subunit methyltransferase H from Bordetella petrii (strain ATCC BAA-461 / DSM 12804 / CCUG 43448).